We begin with the raw amino-acid sequence, 177 residues long: Transmembrane protein 196 (177 aa).

Transmembrane regions (helical) follow at residues 11–31 (LLVLSVLEIGLGLSSVAVGAV), 47–67 (SSPVWSGACFLICGVCGIFCA), 73–93 (LIMILFSACCICGLIGGILNI), and 106–126 (LYSLYLASMSLACIGISGCTI). Positions 152–162 (HSHEMTEKDTE) are enriched in basic and acidic residues. The segment at 152-177 (HSHEMTEKDTENITNGGGPLALNGRV) is disordered.

The protein resides in the cytoplasm. Its subcellular location is the membrane. This Xenopus tropicalis (Western clawed frog) protein is Transmembrane protein 196 (tmem196).